Consider the following 276-residue polypeptide: MAKKITLPQCKEMKKQGKRLRMITAYDYPFARLVDESEIEIILVGDSLGMVVLGYDSTVPVTLDEMIHHCKPVVRGAPNTLVVADMPFGSYNVSKEDAIRNANRMLKESGIEAVKVEGGTRMAPTVRALVDAGIPVMGHIGLTPQTAAQLGGFKVQGKTEDAAQQLLEDALALESAGAFSIVIECVPAGLARTITASLSIPTIGIGAGPYCNGQVLVIQDLLGIYDRFVPKFVKQYAQTGPAIRAALNDYAREVADGVFPGPEHSFGMDDEMKGLY.

Positions 46 and 85 each coordinate Mg(2+). Residues 46 to 47 (DS), D85, and K115 contribute to the 3-methyl-2-oxobutanoate site. E117 is a binding site for Mg(2+). Residue E184 is the Proton acceptor of the active site.

The protein belongs to the PanB family. As to quaternary structure, homodecamer; pentamer of dimers. Mg(2+) serves as cofactor.

The protein resides in the cytoplasm. The catalysed reaction is 3-methyl-2-oxobutanoate + (6R)-5,10-methylene-5,6,7,8-tetrahydrofolate + H2O = 2-dehydropantoate + (6S)-5,6,7,8-tetrahydrofolate. The protein operates within cofactor biosynthesis; (R)-pantothenate biosynthesis; (R)-pantoate from 3-methyl-2-oxobutanoate: step 1/2. Functionally, catalyzes the reversible reaction in which hydroxymethyl group from 5,10-methylenetetrahydrofolate is transferred onto alpha-ketoisovalerate to form ketopantoate. The polypeptide is 3-methyl-2-oxobutanoate hydroxymethyltransferase (Heliobacterium modesticaldum (strain ATCC 51547 / Ice1)).